A 238-amino-acid chain; its full sequence is Uridylate kinase (238 aa).

12 to 15 (KLSG) is an ATP binding site. Gly-54 is a binding site for UMP. Positions 55 and 59 each coordinate ATP. UMP-binding positions include Asp-74 and 135–142 (TGNPYFTT). ATP contacts are provided by Thr-162, Tyr-168, and Asp-171.

The protein belongs to the UMP kinase family. As to quaternary structure, homohexamer.

It is found in the cytoplasm. The catalysed reaction is UMP + ATP = UDP + ADP. It participates in pyrimidine metabolism; CTP biosynthesis via de novo pathway; UDP from UMP (UMPK route): step 1/1. With respect to regulation, inhibited by UTP. Its function is as follows. Catalyzes the reversible phosphorylation of UMP to UDP. In Oleidesulfovibrio alaskensis (strain ATCC BAA-1058 / DSM 17464 / G20) (Desulfovibrio alaskensis), this protein is Uridylate kinase.